The primary structure comprises 167 residues: NADH-quinone oxidoreductase subunit B 2 (167 aa).

[4Fe-4S] cluster contacts are provided by C38, C39, C104, and C133.

The protein belongs to the complex I 20 kDa subunit family. In terms of assembly, NDH-1 is composed of 14 different subunits. Subunits NuoB, C, D, E, F, and G constitute the peripheral sector of the complex. Requires [4Fe-4S] cluster as cofactor.

Its subcellular location is the cell membrane. It carries out the reaction a quinone + NADH + 5 H(+)(in) = a quinol + NAD(+) + 4 H(+)(out). Its function is as follows. NDH-1 shuttles electrons from NADH, via FMN and iron-sulfur (Fe-S) centers, to quinones in the respiratory chain. The immediate electron acceptor for the enzyme in this species is believed to be ubiquinone. Couples the redox reaction to proton translocation (for every two electrons transferred, four hydrogen ions are translocated across the cytoplasmic membrane), and thus conserves the redox energy in a proton gradient. The sequence is that of NADH-quinone oxidoreductase subunit B 2 from Roseiflexus sp. (strain RS-1).